Here is a 931-residue protein sequence, read N- to C-terminus: Chitin synthase III (931 aa).

2 N-linked (GlcNAc...) asparagine glycosylation sites follow: N37 and N94. The interval 93–154 (PNASQLPPAG…PGGVGQAGGL (62 aa)) is disordered. Residues 102 to 122 (GSGGFGDNGFGQYGQPQGFGG) show a composition bias toward gly residues. N558 is a glycosylation site (N-linked (GlcNAc...) asparagine). 5 helical membrane-spanning segments follow: residues 585 to 605 (FFLHIQVIYNVLNVIFSWFSL), 644 to 664 (IINALLKYLYLAFVILQFILA), 677 to 697 (IASFMVFGLIQGYILVLSGYL), 731 to 751 (VILIALITIYGLYFVASFLYL), and 759 to 779 (SFPYYMLLMSTYINILMVYAF). N802 carries an N-linked (GlcNAc...) asparagine glycan. The next 2 helical transmembrane spans lie at 858–878 (TGLVVSWLFSNILLVVIITSD) and 899–919 (FLLYATAALSIVRFIGFLWFL).

It belongs to the chitin synthase family. Class III subfamily. Highly expressed in conidia and during appressorium formation.

The protein resides in the cell membrane. It catalyses the reaction [(1-&gt;4)-N-acetyl-beta-D-glucosaminyl](n) + UDP-N-acetyl-alpha-D-glucosamine = [(1-&gt;4)-N-acetyl-beta-D-glucosaminyl](n+1) + UDP + H(+). Polymerizes chitin, a structural polymer of the cell wall and septum, by transferring the sugar moiety of UDP-GlcNAc to the non-reducing end of the growing chitin polymer. Contributes to the production of conidia and the ability of fungal conidia to germinate. Involved in the fungal cell wall integrity and the ability of conidia to withstand biophysical pressure. Required for appressorium formation and evasion of insect cellular and/or humoral defenses, promoting the fungal dimorphic transition to the production of hyphal bodies that occurs within hosts, and ultimately to virulence. The protein is Chitin synthase III of Metarhizium acridum (strain CQMa 102).